The chain runs to 140 residues: Granulocyte-macrophage colony-stimulating factor (140 aa).

Residues 1-17 form the signal peptide; that stretch reads MWLQNLLLLGTVVCSIC. Serine 24 carries an O-linked (GalNAc...) serine glycan. The O-linked (GalNAc...) threonine glycan is linked to threonine 27. N-linked (GlcNAc...) asparagine glycosylation is found at asparagine 45, asparagine 55, and asparagine 87. 2 disulfide bridges follow: cysteine 72/cysteine 114 and cysteine 106/cysteine 139.

It belongs to the GM-CSF family. Monomer. The signaling GM-CSF receptor complex is a dodecamer of two head-to-head hexamers of two alpha, two beta, and two ligand subunits.

Its subcellular location is the secreted. In terms of biological role, cytokine that stimulates the growth and differentiation of hematopoietic precursor cells from various lineages, including granulocytes, macrophages, eosinophils and erythrocytes. This chain is Granulocyte-macrophage colony-stimulating factor (CSF2), found in Cavia porcellus (Guinea pig).